Here is a 266-residue protein sequence, read N- to C-terminus: Large ribosomal subunit protein eL8 (266 aa).

Glycyl lysine isopeptide (Lys-Gly) (interchain with G-Cter in SUMO2) cross-links involve residues lysine 11, lysine 20, and lysine 21. Position 34 is an N6-acetyllysine (lysine 34). A Glycyl lysine isopeptide (Lys-Gly) (interchain with G-Cter in SUMO2) cross-link involves residue lysine 48. Lysine 97 is modified (N6-acetyllysine; alternate). Lysine 97 participates in a covalent cross-link: Glycyl lysine isopeptide (Lys-Gly) (interchain with G-Cter in SUMO2); alternate. Residue lysine 125 forms a Glycyl lysine isopeptide (Lys-Gly) (interchain with G-Cter in SUMO2) linkage. Residue lysine 217 is modified to N6-acetyllysine. Residue lysine 245 forms a Glycyl lysine isopeptide (Lys-Gly) (interchain with G-Cter in SUMO2) linkage.

Belongs to the eukaryotic ribosomal protein eL8 family. As to quaternary structure, component of the large ribosomal subunit. Interacts with CRY1. Interacts with DICER1, AGO2, TARBP2, MOV10 and EIF6; they form a large RNA-induced silencing complex (RISC).

It is found in the cytoplasm. Component of the large ribosomal subunit. The ribosome is a large ribonucleoprotein complex responsible for the synthesis of proteins in the cell. This Mus musculus (Mouse) protein is Large ribosomal subunit protein eL8 (Rpl7a).